A 457-amino-acid polypeptide reads, in one-letter code: Serine--tRNA ligase (457 aa).

An L-serine-binding site is contributed by 252–254; sequence TAE. Residues 283-285 and Val299 each bind ATP; that span reads RKE. Glu306 serves as a coordination point for L-serine. 370–373 is a binding site for ATP; the sequence is EMVS. An L-serine-binding site is contributed by Thr406.

Belongs to the class-II aminoacyl-tRNA synthetase family. Type-1 seryl-tRNA synthetase subfamily. As to quaternary structure, homodimer. The tRNA molecule binds across the dimer.

The protein localises to the cytoplasm. The enzyme catalyses tRNA(Ser) + L-serine + ATP = L-seryl-tRNA(Ser) + AMP + diphosphate + H(+). It catalyses the reaction tRNA(Sec) + L-serine + ATP = L-seryl-tRNA(Sec) + AMP + diphosphate + H(+). Its pathway is aminoacyl-tRNA biosynthesis; selenocysteinyl-tRNA(Sec) biosynthesis; L-seryl-tRNA(Sec) from L-serine and tRNA(Sec): step 1/1. Functionally, catalyzes the attachment of serine to tRNA(Ser). Is also able to aminoacylate tRNA(Sec) with serine, to form the misacylated tRNA L-seryl-tRNA(Sec), which will be further converted into selenocysteinyl-tRNA(Sec). This is Serine--tRNA ligase from Saccharolobus islandicus (strain Y.G.57.14 / Yellowstone #1) (Sulfolobus islandicus).